The primary structure comprises 1357 residues: MAKTSYALLLLDILLTFNVAKAIELRFVPDPPTLNITEKTIKINASDTLQITCRGRQILEWSTPHNRTSSETRLTISDCSGDGLFCSTLTLSKAVANETGEYRCFYKSLPKEDGKTSVAVYVFIQDYRTPFVRIAQDYDVVFIREGEQVVIPCLVSVEDLNVTLYTKYPVKELSTDGKEVIWDSRRGFILPSRVVSYAGVVYCQTTIRNETFQSSPYIVAVVGYKIYDLTLSPQHERLTVGERLILNCTAHTELNVGIDFQWTFPHEKRSVNGSMSTSRYKTSSNKKKLWNSLELSNTLTVENVTLNDTGEYICTASSGQMQKIAQASLIVYEKPFIALSDQLWQTVEAKAGDAEAKILVKYYAYPEPAVRWYKNDQLIVLRDEYRMKFYRGVHLTIYGVTEKDAGNYTVVMTNKITKEEQRRTFQLVVNDLPRIFEKDVSLDRDVHMYGSSPTLTCTASGGSSPVTIKWQWMPREDCPVRFLPKSDTRMAKCDKWREMSNNTGKNPLISQTSVDERTLKTISTLKIQKAVDHALYRCIATNKMGQDQRVIVFQVTRFLNLSVLPSSSPIEGQDVIMRCVADRLLYYNLRWYRVANVANHDPPPAAVPCDTLTLSHLHQPNVTVSGLQGTNVTLDMPIPNATMMDQGLYACQVEIVGTNEKTCLLHNLRLRALEMSRIVTNLTDQRVNVSDSTTLVCEVSGTPTPTIVWTKDNQTVMEGSGVILKRSNRVLTIQRVKKEDSGLYICTACNQQGCESSEARISVDGAEEKMNVELIMPIGAVVIAMFLWLLIVFVIRNRKRPNDGDLKTGYLSIILDSDDMPMDEHCERLTYDASKWEFPRDRLKLGEPLGRGAFGQVVEATAYGIEKATTCTTVAVKMLKEGATSSEYRALMSELKILIHIGHHLNVVNLLGACTKQGGPLMVIVEYCKHGNLSSYLKSKRGEYSPYKKRTPRMPNRREVQQDEDPREGDLGLGTSTRLDICTGTAVCTRTGEQTYKTLQDEQESSDWDHLTMEDLISYSFQVAKGMEFLASRKCIHRDLAARNILLSENSVVKICDFGLARDVYKDPDYVRKGDARLPLKWMAPETIFDRVYTTQSDVWSFGVLLWEIFSLGASPYPGVCIDESFCRRLKEGTRMRAPDYATPEIYQTMLDCWLDRPLDRPTFTQLVEHLGNLLQASAQQDGKDYIPLTNGEMEEELVAPHLNVTSKRSFYAGNTEAQLHYDNAPPLGFPQQMNSSGVPVNMTGFVDIPLEHTTVMDGHVDCGVGLSREQMKALDRQAQRPLNFSPLLRCKSKESLASESSNQTSGYQSGYHSDDAEAPIYANEEMILKRDIRKKPPLPKRNDKFSAEVRYSAPPV.

An N-terminal signal peptide occupies residues 1 to 22 (MAKTSYALLLLDILLTFNVAKA). The Extracellular portion of the chain corresponds to 23–774 (IELRFVPDPP…GAEEKMNVEL (752 aa)). 7 Ig-like C2-type domains span residues 32–120 (PTLN…SVAV), 120–222 (VYVF…VAVV), 216–330 (PYIV…ASLI), 335–426 (PFIA…RTFQ), 433–553 (PRIF…VIVF), 556–667 (TRFL…LLHN), and 676–762 (SRIV…ARIS). Residues Asn35, Asn44, Asn66, Asn97, Asn161, Asn209, Asn247, Asn272, Asn303, Asn307, Asn407, Asn501, Asn560, Asn621, Asn631, Asn640, Asn681, Asn688, and Asn713 are each glycosylated (N-linked (GlcNAc...) asparagine). Disulfide bonds link Cys53/Cys104 and Cys153/Cys203. A disulfide bridge links Cys248 with Cys314. Cys457 and Cys538 are disulfide-bonded. A disulfide bond links Cys579 and Cys651. Residues Cys697 and Cys746 are joined by a disulfide bond. The helical transmembrane segment at 775-795 (IMPIGAVVIAMFLWLLIVFVI) threads the bilayer. Residues 796 to 1357 (RNRKRPNDGD…AEVRYSAPPV (562 aa)) lie on the Cytoplasmic side of the membrane. One can recognise a Protein kinase domain in the interval 843–1173 (LKLGEPLGRG…FTQLVEHLGN (331 aa)). ATP is bound by residues 849–857 (LGRGAFGQV) and Lys877. The interval 944 to 975 (YSPYKKRTPRMPNRREVQQDEDPREGDLGLGT) is disordered. The active-site Proton acceptor is Asp1039. Residues Tyr1065, Tyr1070, Tyr1186, and Tyr1222 each carry the phosphotyrosine; by autocatalysis modification. Residues 1296–1357 (SLASESSNQT…AEVRYSAPPV (62 aa)) are disordered. Over residues 1298-1312 (ASESSNQTSGYQSGY) the composition is skewed to polar residues.

It belongs to the protein kinase superfamily. Tyr protein kinase family. CSF-1/PDGF receptor subfamily. In terms of assembly, interacts with isoform VEGF165 of vegfaa and, to a lesser extent, with isoform VEGF171 of vegfab. Interacts (via juxtamembrane region) with chaperone pdcl3 (via thioredoxin fold region); the interaction leads to increased vegfr2 abundance through inhibition of its ubiquitination and degradation. In terms of tissue distribution, first expressed in embryos between 5- and 7-somites in the bilateral stripes that contain the developing angioblasts, and then localized to the intermediate cell mass (ICM) and the developing vasculature. By 30 hpf, expressed in the major trunk, head and intersomitic vessels, persisting through 4 dpf when expression is seen in developing subintestinal veins and in the remaining vasculature.

Its subcellular location is the cell membrane. It is found in the cytoplasm. The protein resides in the nucleus. The protein localises to the cytoplasmic vesicle. It localises to the early endosome. Its subcellular location is the cell junction. It is found in the endoplasmic reticulum. It carries out the reaction L-tyrosyl-[protein] + ATP = O-phospho-L-tyrosyl-[protein] + ADP + H(+). Its function is as follows. Receptor for VEGF or VEGFC. Has a tyrosine-protein kinase activity. Combinations of multiple VEGF receptors are required for development of different blood vessel types in the embryo. Involved in angiogenesis, specifically in VEGF-induced sprouting of new blood vessels. Particularly involved in artery formation. Does not appear to be required for hematopoiesis. This is Vascular endothelial growth factor receptor 2 from Danio rerio (Zebrafish).